Reading from the N-terminus, the 283-residue chain is Polyamine aminopropyltransferase (283 aa).

The 237-residue stretch at 5 to 241 (NNWYIEHFER…GWWSVTMARK (237 aa)) folds into the PABS domain. Gln35 is a binding site for S-methyl-5'-thioadenosine. The spermidine site is built by His66 and Asp90. Residues Asp110 and 141 to 142 (DG) each bind S-methyl-5'-thioadenosine. The Proton acceptor role is filled by Asp160. 160 to 163 (DSTD) provides a ligand contact to spermidine. Pro167 contacts S-methyl-5'-thioadenosine.

The protein belongs to the spermidine/spermine synthase family. In terms of assembly, homodimer or homotetramer.

It localises to the cytoplasm. It catalyses the reaction S-adenosyl 3-(methylsulfanyl)propylamine + putrescine = S-methyl-5'-thioadenosine + spermidine + H(+). The protein operates within amine and polyamine biosynthesis; spermidine biosynthesis; spermidine from putrescine: step 1/1. Catalyzes the irreversible transfer of a propylamine group from the amino donor S-adenosylmethioninamine (decarboxy-AdoMet) to putrescine (1,4-diaminobutane) to yield spermidine. In Stenotrophomonas maltophilia (strain K279a), this protein is Polyamine aminopropyltransferase.